A 1014-amino-acid chain; its full sequence is Nebulette (1014 aa).

The segment at 1-24 (MRVPVFEDIKDETEEEKIGEEENE) is disordered. The span at 9–24 (IKDETEEEKIGEEENE) shows a compositional bias: acidic residues. Nebulin repeat units follow at residues 29 to 63 (FYKP…KSKD), 64 to 99 (KCTF…DLSN), 100 to 136 (SLYK…AKGF), 137 to 172 (SDYA…DTHT), 173 to 205 (YSAE…GIMN), 206 to 241 (KEPA…EMKD), 242 to 278 (KKHH…NMHD), 279 to 313 (PVSD…ENKG), 314 to 348 (MYHF…KNKG), 349 to 385 (KPML…EIKG), 386 to 422 (RSSL…EIKG), 423 to 459 (KGME…IIKG), 460 to 496 (KGMQ…EIKG), 497 to 533 (KGMQ…EIKG), 534 to 569 (KGMQ…KMLS), 570 to 599 (NYST…KKEV), 600 to 635 (GAGT…HATA), 636 to 666 (ISDP…KATP), 667 to 693 (VSMT…GELQ), 694 to 728 (RGTA…RATT), 729 to 759 (LSVT…QMKG), 760 to 794 (RPSL…KTKG), and 795 to 830 (RGFT…HIVE). Position 96 is an omega-N-methylarginine (aspartate 96). At arginine 795 the chain carries Omega-N-methylarginine. The interval 836–953 (GIIVDLKVWR…VSSMRSMQHS (118 aa)) is linker. The 61-residue stretch at 954–1014 (PNLRTYRAMY…LPANYIEFVN (61 aa)) folds into the SH3 domain.

In terms of assembly, interacts (via nebulin repeats 1-5) with DESM (via rod region). Interacts (via SH3 domain) with XIRP2. As to quaternary structure, interacts with ZYX/Zyxin. As to expression, abundantly expressed in cardiac muscle, but not in skeletal or smooth muscle. Localized to Z-lines in cardiac cells and to dense bodies in nonmuscle cells. Isoform 2 is expressed in non-muscle cells such as in fibroblasts.

It is found in the cytoplasm. In terms of biological role, binds to actin and plays an important role in the assembly of the Z-disk. May functionally link sarcomeric actin to the desmin intermediate filaments in the heart muscle sarcomeres. Its function is as follows. May play a role in the assembly of focal adhesions. The chain is Nebulette from Homo sapiens (Human).